The sequence spans 183 residues: Ion-translocating oxidoreductase complex subunit B (183 aa).

The interval 1 to 23 (MLSALLVMAAIAVVLGAALGFAA) is hydrophobic. In terms of domain architecture, 4Fe-4S spans 29–88 (EGDPLVDKIDAILPQTQCGQCGYPGCKPYAQAIAQGEADINQCPPGGEEGVRKLADLLGR). C46, C49, C54, C71, C113, C116, C119, C123, C143, C146, C149, and C153 together coordinate [4Fe-4S] cluster. 4Fe-4S ferredoxin-type domains lie at 104 to 133 (AVAYIDENVCIGCTLCLQACPVDAIVGAAK) and 135 to 163 (MHTVVDPLCTGCELCVAPCPVDCIYMEPV).

Belongs to the 4Fe4S bacterial-type ferredoxin family. RnfB subfamily. The complex is composed of six subunits: RnfA, RnfB, RnfC, RnfD, RnfE and RnfG. It depends on [4Fe-4S] cluster as a cofactor.

Its subcellular location is the cell inner membrane. Functionally, part of a membrane-bound complex that couples electron transfer with translocation of ions across the membrane. In Azoarcus sp. (strain BH72), this protein is Ion-translocating oxidoreductase complex subunit B.